We begin with the raw amino-acid sequence, 299 residues long: 33 kDa chaperonin (299 aa).

2 cysteine pairs are disulfide-bonded: Cys234–Cys236 and Cys268–Cys271.

This sequence belongs to the HSP33 family. In terms of processing, under oxidizing conditions two disulfide bonds are formed involving the reactive cysteines. Under reducing conditions zinc is bound to the reactive cysteines and the protein is inactive.

Its subcellular location is the cytoplasm. Its function is as follows. Redox regulated molecular chaperone. Protects both thermally unfolding and oxidatively damaged proteins from irreversible aggregation. Plays an important role in the bacterial defense system toward oxidative stress. The protein is 33 kDa chaperonin of Pseudomonas putida (strain ATCC 700007 / DSM 6899 / JCM 31910 / BCRC 17059 / LMG 24140 / F1).